A 440-amino-acid chain; its full sequence is Thymidine phosphorylase (440 aa).

This sequence belongs to the thymidine/pyrimidine-nucleoside phosphorylase family. In terms of assembly, homodimer.

The enzyme catalyses thymidine + phosphate = 2-deoxy-alpha-D-ribose 1-phosphate + thymine. It participates in pyrimidine metabolism; dTMP biosynthesis via salvage pathway; dTMP from thymine: step 1/2. Functionally, the enzymes which catalyze the reversible phosphorolysis of pyrimidine nucleosides are involved in the degradation of these compounds and in their utilization as carbon and energy sources, or in the rescue of pyrimidine bases for nucleotide synthesis. The protein is Thymidine phosphorylase of Yersinia pestis.